A 253-amino-acid polypeptide reads, in one-letter code: MSAVRFEGVTKRFGQTLALDEVSFTVEPGEVVVLLGLSGSGKSTLLRHVDGLHGASAGRVIALGTDVGQARGARLRELRRRISFVFQQFHLVDSLSVLENVCTGALGRLRGLRLGLVTYPRAVRLEALEHLERVGLASQAFQRADTLSGGQQQRVAVARALMQRPEILLADEPVASLDPESSAQVMGLIREIASERNLTVLCSLHQVELALSWADRIVGLRSGQVVLDKAAGDLDHQQAVAMIYRAGPLRAIA.

In terms of domain architecture, ABC transporter spans 4 to 247; sequence VRFEGVTKRF…QAVAMIYRAG (244 aa). 36 to 43 lines the ATP pocket; it reads GLSGSGKS.

This sequence belongs to the ABC transporter superfamily. Phosphonates importer (TC 3.A.1.9.1) family. The complex is composed of two ATP-binding proteins (PhnC), two transmembrane proteins (PhnE) and a solute-binding protein (PhnD).

It is found in the cell membrane. The catalysed reaction is phosphonate(out) + ATP + H2O = phosphonate(in) + ADP + phosphate + H(+). Its function is as follows. Part of the ABC transporter complex PhnCDE involved in phosphonates import. Responsible for energy coupling to the transport system. This chain is Phosphonates import ATP-binding protein PhnC, found in Frankia casuarinae (strain DSM 45818 / CECT 9043 / HFP020203 / CcI3).